Here is a 108-residue protein sequence, read N- to C-terminus: ATP-dependent Clp protease adapter protein ClpS (108 aa).

The protein belongs to the ClpS family. Binds to the N-terminal domain of the chaperone ClpA.

In terms of biological role, involved in the modulation of the specificity of the ClpAP-mediated ATP-dependent protein degradation. The sequence is that of ATP-dependent Clp protease adapter protein ClpS from Mycobacterium leprae (strain TN).